The primary structure comprises 556 residues: Undecaprenyl phosphate-alpha-4-amino-4-deoxy-L-arabinose arabinosyl transferase (556 aa).

10 helical membrane passes run 88–108 (FASV…AMML), 116–136 (LLAA…TYSV), 179–199 (FMTK…PVAL), 207–227 (LLLF…PWAL), 258–278 (APFW…LALL), 296–316 (FFLL…KGKL), 319–339 (YILP…SGLA), 355–375 (IVFG…IIVP), 384–404 (LTII…AVSL), and 410–430 (WGYL…GSIP).

This sequence belongs to the glycosyltransferase 83 family.

The protein resides in the cell inner membrane. The enzyme catalyses 4-amino-4-deoxy-alpha-L-arabinopyranosyl di-trans,octa-cis-undecaprenyl phosphate + lipid IVA = lipid IIA + di-trans,octa-cis-undecaprenyl phosphate.. Its pathway is lipopolysaccharide metabolism; 4-amino-4-deoxy-beta-L-arabinose-lipid A biosynthesis. Its function is as follows. Catalyzes the transfer of the L-Ara4N moiety of the glycolipid undecaprenyl phosphate-alpha-L-Ara4N to lipid A. The modified arabinose is attached to lipid A and is required for resistance to polymyxin and cationic antimicrobial peptides. This chain is Undecaprenyl phosphate-alpha-4-amino-4-deoxy-L-arabinose arabinosyl transferase, found in Pectobacterium atrosepticum (strain SCRI 1043 / ATCC BAA-672) (Erwinia carotovora subsp. atroseptica).